Here is a 296-residue protein sequence, read N- to C-terminus: Endochitinase 3 (296 aa).

In terms of domain architecture, GH18 spans His-12–Asp-296. N-linked (GlcNAc...) asparagine glycans are attached at residues Asn-32 and Asn-152. The Proton donor role is filled by Glu-153. N-linked (GlcNAc...) asparagine glycosylation is present at Asn-228.

The protein belongs to the glycosyl hydrolase 18 family. Chitinase class III subfamily.

It is found in the secreted. It carries out the reaction Random endo-hydrolysis of N-acetyl-beta-D-glucosaminide (1-&gt;4)-beta-linkages in chitin and chitodextrins.. Secreted chitinase involved in the degradation of chitin, a component of the cell walls of fungi and exoskeletal elements of some animals (including worms and arthropods). Participates in the infection process and directly acts in the penetration process of the host cuticle. Involved in heat-shock adaptation. This chain is Endochitinase 3 (chi3), found in Metarhizium anisopliae (Entomophthora anisopliae).